Here is a 1839-residue protein sequence, read N- to C-terminus: MSSPTDAERVNMRREKHPQIEETFEEHVHNAMPKFKKHYALGITTHTNDEDDDPRDHRQRGIHNPNFIHSPNDPRPPLSQPIKPRFSVHGTASNASVFSHGDIAPVRKTSRAGSLFKRLAGKKSTTSLLGTEHQQRQQQQSSNSLVPAAGLRRKMSTFIHGGSGSQSNESRGTRSSIFFPSTSNSRRGSATSTMTSGSRSSHPPDTPPITSQQQEQQYDQQRQQRPETREQEQKPPTLSDMPIVSRSPSFFMLDTDLNNLSDITNIISATPKNTESDEVRSTGANKTLKYPKPPLSSHKSTSASDLSHHKAQWTAPESWDIEEDANKLLATKRKAKHHHHYHHPQHPRPPHRKHYSNFSKPIEDKAVVEKEQEPPEKCPQPISTDSNDAQGLEIAKPIDESSGIQHSASTQSVSSFSSGATGASGATGKQIGGDQETESTISTVGEDEEVTNLRSIDSEQTDDTSFSKFDEEYDKAEYQLEKYYNDFSDVDLNRRYAIRIFNIDDTFTTLSCTPNTTLQDMMPQLKRKFNVGQGSYQVSLKVGKLSKILRPTAKPILIQRRLLLLNGYLKSDPLHIMGIEDLSFIFSFVFHPVATSHLNYEQEQRLSRGDFVHVDLRNMDLTTPPIILYQHTSDIESLDVSNNANIFLPLDFIESAIKLSSLRMVNIRASKFPANVTDAYKLVSLDLERNFIKKVPDSIFKLNNLTIVNLQCNNLERLPPGFSKLKNLQLLDISSNKFVNYPEVINSCTNLLQIDLSYNKIHSLPVSINQLVKLAKMNLFNNRLTSVGDLSQMKNLRTLNLRCNRVTSIECHAPNLQNLFLTDNRISTFDDDLTRLRTLELQQNPITSMVCGGNYMANMTSLSLNKAKLSSFSAELLSKLPRLEKLELNENNLTQLPPEINKLTRLIYLSVARNKLESIPDEISDLRSLKSLDLHSNNLRMLMNNLEDLELTSLNVSSNLLTGFHGSPAKFFASPSPKLAKSLLFLSVADNNLTDSIWPLVNTFQNLKTLNLSYNNFVEISDLKLQNLTELYLSGNNFTSLPGEAVQHLRSLKVLMLNGNKLLSLPAELSQLSRLSVLDVGSNQLKYNISNYHYDWNWRNNKDLKYLNFSGNKRFEIKSALDPEGKNDLSDLGILKQLRVLGLMDVTLKTSKVPDESVSIRLRTTASMINGMRYGVADTLGQSDSVCSRDVTFERFRGREDECLICLYDGKNENASSGHKISKIIRDIYDKILIRLLEKYGEESDGIKRALRYSFLQLNKEINGMLVSVEDGNTDSGLTSADLLSGSSATVVYLKGKKIYTANIGDTMAVLSKNNGDFVTLTKLHVPAEREEYERIRTSGGYVNNQKLDGVSEVSRAVGFFDLLPHIHASPDISETVLSYSDEMLIIATHKLWEYLDYETVCDISRENKSQPMSAAEKMKDYAISYGCSDNITILCVSLDKSVNQQSQFTLNREDLISRKNTFEDTVLRRLQPEIAPPTGNVAIVFTDIKNSTFLWELFPDAMRAAIKTHNDIMRRQLRIYGGYEVKTEGDAFMVAFPTPTSALVWCLSVQLKLLEAEWPEEITSIQDGCLITDNSGTKVYLGLSVRMGVHWGCPVPEIDLVTQRMDYLGPVVNKAARVSGVADGGQITLSSDFCSEFKKIMKFHKRVVENQEPLKEVYGEDFIGEVLEREIHMLENVGWVFKDLGEQKLKGLETKEFITIAYPKTLASRHDLATKNQNSSVLNDDLLFQLRTISNKLENILSSINGGLIESETPGNSSIYMTFDKNTKDAVITKSTESDWISFLDHLVTRVESTVAILQLRQKLQGGLELYTSSDSTMHKSVFELLDEILKIQTDQKQ.

Disordered regions lie at residues 1–21, 43–87, 126–245, 272–315, 332–388, and 400–468; these read MSSP…PQIE, ITTH…PRFS, TSLL…PIVS, KNTE…QWTA, KRKA…DSND, and ESSG…SFSK. Over residues 165–211 the composition is skewed to polar residues; sequence SQSNESRGTRSSIFFPSTSNSRRGSATSTMTSGSRSSHPPDTPPITS. A compositionally biased stretch (low complexity) spans 212–221; it reads QQQEQQYDQQ. A compositionally biased stretch (basic and acidic residues) spans 222–233; the sequence is RQQRPETREQEQ. The span at 332–355 shows a compositional bias: basic residues; sequence KRKAKHHHHYHHPQHPRPPHRKHY. The span at 361-376 shows a compositional bias: basic and acidic residues; the sequence is PIEDKAVVEKEQEPPE. The span at 407–428 shows a compositional bias: low complexity; the sequence is SASTQSVSSFSSGATGASGATG. The 81-residue stretch at 494–574 folds into the Ras-associating domain; that stretch reads RRYAIRIFNI…LNGYLKSDPL (81 aa). LRR repeat units follow at residues 632 to 655, 659 to 679, 681 to 702, 704 to 726, 727 to 748, 750 to 771, 773 to 794, 795 to 816, 817 to 834, 835 to 856, 858 to 879, 882 to 903, 905 to 926, 928 to 950, 951 to 971, 982 to 1004, 1006 to 1027, 1028 to 1048, 1051 to 1073, 1074 to 1096, 1103 to 1124, and 1135 to 1160; these read TSDI…FIES, LSSL…VTDA, KLVS…IFKL, NLTI…SKLK, NLQL…INSC, NLLQ…INQL, KLAK…SQMK, NLRT…APNL, QNLF…DDLT, RLRT…GNYM, NMTS…LLSK, RLEK…INKL, RLIY…ISDL, SLKS…EDLE, LTSL…PAKF, SLLF…VNTF, NLKT…KLQN, LTEL…AVQH, SLKV…SQLS, RLSV…HYDW, DLKY…LDPE, and LKQL…SVSI. The PPM-type phosphatase domain maps to 1173 to 1439; that stretch reads RYGVADTLGQ…DNITILCVSL (267 aa). The Guanylate cyclase domain occupies 1483 to 1620; the sequence is AIVFTDIKNS…PVVNKAARVS (138 aa). The Mg(2+) site is built by aspartate 1488 and aspartate 1531.

This sequence belongs to the adenylyl cyclase class-3 family. The cofactor is Mg(2+).

The catalysed reaction is ATP = 3',5'-cyclic AMP + diphosphate. Functionally, plays essential roles in regulation of cellular metabolism by catalyzing the synthesis of a second messenger, cAMP. The polypeptide is Adenylate cyclase (CYR1) (Lachancea kluyveri (Yeast)).